The primary structure comprises 484 residues: Pentatricopeptide repeat-containing protein At1g09190 (484 aa).

PPR repeat units lie at residues N66–A100, D101–R135, L136–R166, N167–R197, S198–P232, D233–K267, F269–R299, N300–A334, N336–R366, and R372–A406. Positions M407–V482 are type E motif.

Belongs to the PPR family. PCMP-E subfamily.

The polypeptide is Pentatricopeptide repeat-containing protein At1g09190 (PCMP-E70) (Arabidopsis thaliana (Mouse-ear cress)).